The primary structure comprises 133 residues: Type VI secretion amidase effector 2 protein (133 aa).

Residues cysteine 23 and histidine 73 contribute to the active site.

This sequence belongs to the cell wall amidase Dae2/Tae2-like family.

The protein localises to the host periplasm. It localises to the secreted. It functions in the pathway cell wall degradation; peptidoglycan degradation. Its function is as follows. Toxic component of a contact-dependent interbacterial competition system (also called effector-immunity systems). Secreted by the SPI-6 type VI secretion system, probably into the periplasm of bacterial target cells. A cell wall amidase with specificity toward the D-meso-DAP-D-alanine bond (D-meso-diaminopimelic-D-alanine) found in peptidoglycan of Gram-negative bacteria. Toxicity is counteracted by a cognate immunity protein Tai2 (t2585), but not immunity proteins associated with a similar endopeptidase in other bacteria. In vitro degrades peptidoglycans from Gram-negative but not Gram-positive bacteria. In Salmonella typhi, this protein is Type VI secretion amidase effector 2 protein.